A 700-amino-acid polypeptide reads, in one-letter code: Elongation factor G (700 aa).

The 277-residue stretch at 10–286 folds into the tr-type G domain; that stretch reads SKVRNIGIMA…AVIDYLPSPL (277 aa). Residues 19–26, 83–87, and 137–140 contribute to the GTP site; these read AHIDAGKT, DTPGH, and NKMD.

It belongs to the TRAFAC class translation factor GTPase superfamily. Classic translation factor GTPase family. EF-G/EF-2 subfamily.

The protein localises to the cytoplasm. In terms of biological role, catalyzes the GTP-dependent ribosomal translocation step during translation elongation. During this step, the ribosome changes from the pre-translocational (PRE) to the post-translocational (POST) state as the newly formed A-site-bound peptidyl-tRNA and P-site-bound deacylated tRNA move to the P and E sites, respectively. Catalyzes the coordinated movement of the two tRNA molecules, the mRNA and conformational changes in the ribosome. This is Elongation factor G from Mycolicibacterium gilvum (strain PYR-GCK) (Mycobacterium gilvum (strain PYR-GCK)).